A 258-amino-acid chain; its full sequence is Imidazole glycerol phosphate synthase subunit HisF (258 aa).

Catalysis depends on residues Asp-11 and Asp-130.

Belongs to the HisA/HisF family. Heterodimer of HisH and HisF.

The protein localises to the cytoplasm. The catalysed reaction is 5-[(5-phospho-1-deoxy-D-ribulos-1-ylimino)methylamino]-1-(5-phospho-beta-D-ribosyl)imidazole-4-carboxamide + L-glutamine = D-erythro-1-(imidazol-4-yl)glycerol 3-phosphate + 5-amino-1-(5-phospho-beta-D-ribosyl)imidazole-4-carboxamide + L-glutamate + H(+). It participates in amino-acid biosynthesis; L-histidine biosynthesis; L-histidine from 5-phospho-alpha-D-ribose 1-diphosphate: step 5/9. In terms of biological role, IGPS catalyzes the conversion of PRFAR and glutamine to IGP, AICAR and glutamate. The HisF subunit catalyzes the cyclization activity that produces IGP and AICAR from PRFAR using the ammonia provided by the HisH subunit. The protein is Imidazole glycerol phosphate synthase subunit HisF of Nitrobacter winogradskyi (strain ATCC 25391 / DSM 10237 / CIP 104748 / NCIMB 11846 / Nb-255).